Reading from the N-terminus, the 141-residue chain is Galactose-6-phosphate isomerase subunit LacA (141 aa).

It belongs to the LacAB/RpiB family. As to quaternary structure, heteromultimeric protein consisting of LacA and LacB.

It carries out the reaction aldehydo-D-galactose 6-phosphate = keto-D-tagatose 6-phosphate. Its pathway is carbohydrate metabolism; D-galactose 6-phosphate degradation; D-tagatose 6-phosphate from D-galactose 6-phosphate: step 1/1. This is Galactose-6-phosphate isomerase subunit LacA from Streptococcus equi subsp. zooepidemicus (strain MGCS10565).